The following is a 267-amino-acid chain: Phosphate import ATP-binding protein PstB (267 aa).

One can recognise an ABC transporter domain in the interval 21–262; the sequence is VAARNLDFYY…PSKQQTEDYI (242 aa). An ATP-binding site is contributed by 53–60; the sequence is GPSGCGKS.

The protein belongs to the ABC transporter superfamily. Phosphate importer (TC 3.A.1.7) family. The complex is composed of two ATP-binding proteins (PstB), two transmembrane proteins (PstC and PstA) and a solute-binding protein (PstS).

The protein localises to the cell inner membrane. The catalysed reaction is phosphate(out) + ATP + H2O = ADP + 2 phosphate(in) + H(+). Functionally, part of the ABC transporter complex PstSACB involved in phosphate import. Responsible for energy coupling to the transport system. In Xanthomonas oryzae pv. oryzae (strain MAFF 311018), this protein is Phosphate import ATP-binding protein PstB.